A 484-amino-acid chain; its full sequence is UDP-N-acetylmuramate--L-alanine ligase (484 aa).

124–130 contributes to the ATP binding site; sequence GTHGKTT.

Belongs to the MurCDEF family.

The protein resides in the cytoplasm. The catalysed reaction is UDP-N-acetyl-alpha-D-muramate + L-alanine + ATP = UDP-N-acetyl-alpha-D-muramoyl-L-alanine + ADP + phosphate + H(+). Its pathway is cell wall biogenesis; peptidoglycan biosynthesis. Functionally, cell wall formation. This Pseudoalteromonas atlantica (strain T6c / ATCC BAA-1087) protein is UDP-N-acetylmuramate--L-alanine ligase.